Consider the following 199-residue polypeptide: Recombination protein RecR (199 aa).

Residues 58 to 73 (CSVCYGLADSDPCHIC) form a C4-type zinc finger. The Toprim domain maps to 81-176 (DVVCVVEQGT…KITRIASGVP (96 aa)).

The protein belongs to the RecR family.

May play a role in DNA repair. It seems to be involved in an RecBC-independent recombinational process of DNA repair. It may act with RecF and RecO. The sequence is that of Recombination protein RecR from Desulfatibacillum aliphaticivorans.